We begin with the raw amino-acid sequence, 99 residues long: Large ribosomal subunit protein eL21 (99 aa).

This sequence belongs to the eukaryotic ribosomal protein eL21 family.

This is Large ribosomal subunit protein eL21 from Staphylothermus marinus (strain ATCC 43588 / DSM 3639 / JCM 9404 / F1).